Consider the following 141-residue polypeptide: ATP synthase epsilon chain 1 (141 aa).

The protein belongs to the ATPase epsilon chain family. As to quaternary structure, F-type ATPases have 2 components, CF(1) - the catalytic core - and CF(0) - the membrane proton channel. CF(1) has five subunits: alpha(3), beta(3), gamma(1), delta(1), epsilon(1). CF(0) has three main subunits: a, b and c.

It localises to the cell inner membrane. Its function is as follows. Produces ATP from ADP in the presence of a proton gradient across the membrane. The chain is ATP synthase epsilon chain 1 from Thiobacillus denitrificans (strain ATCC 25259 / T1).